The following is a 344-amino-acid chain: Melanocyte-stimulating hormone receptor (344 aa).

The Extracellular portion of the chain corresponds to 1-37 (MPMQGAQRKLLGSLNSTPTATSNPGLAANHTGAPCLE). A glycan (N-linked (GlcNAc...) asparagine) is linked at asparagine 29. A helical membrane pass occupies residues 38–63 (VSIPDGLFLSLGLVSLVENVLVVAAI). The Cytoplasmic portion of the chain corresponds to 64-72 (AKNRNLHSS). A helical transmembrane segment spans residues 73–93 (MYXFICCLALSDLLVSGSNML). Over 94-118 (ETAIILLLEAGTLATRASVVQQLHN) the chain is Extracellular. A helical transmembrane segment spans residues 119 to 140 (TIDVLTCSSMLCSLCFLGAIAV). At 141 to 163 (DRYISIFYALRYHSIMTLPRAQR) the chain is on the cytoplasmic side. Residues 164-183 (AIAAIWVASVLSSTLFITYY) form a helical membrane-spanning segment. Residues 184-191 (DHAAVLLC) lie on the Extracellular side of the membrane. The helical transmembrane segment at 192–211 (LVVFFLAMLVLMAVLYVHML) threads the bilayer. Over 212–240 (ARACQHAQGIIRLHNRQLPAHKGFGLRGA) the chain is Cytoplasmic. The chain crosses the membrane as a helical span at residues 241–266 (ATLTILLGIFFLCWGPFFLHLTLVVF). The Extracellular segment spans residues 267–279 (CPQHLTCNCIFKN). Residues 280 to 300 (FKVFLTLIICNTIIDPLIYAF) form a helical membrane-spanning segment. Residues 301-344 (RSQELRRTLKEVLLCSSWPGCWAEGGGDSVWPGSCVTLRGPLPP) are Cytoplasmic-facing. The S-palmitoyl cysteine moiety is linked to residue cysteine 315.

This sequence belongs to the G-protein coupled receptor 1 family. As to quaternary structure, interacts with MGRN1, but does not undergo MGRN1-mediated ubiquitination; this interaction competes with GNAS-binding and thus inhibits agonist-induced cAMP production. Interacts with OPN3; the interaction results in a decrease in MC1R-mediated cAMP signaling and ultimately a decrease in melanin production in melanocytes.

Its subcellular location is the cell membrane. Receptor for MSH (alpha, beta and gamma) and ACTH. The activity of this receptor is mediated by G proteins which activate adenylate cyclase. Mediates melanogenesis, the production of eumelanin (black/brown) and phaeomelanin (red/yellow), via regulation of cAMP signaling in melanocytes. The polypeptide is Melanocyte-stimulating hormone receptor (MC1R) (Callithrix geoffroyi (Geoffroy's marmoset)).